Reading from the N-terminus, the 254-residue chain is MAVTDSTVVFISGVGKGIGAGIAKLYLSRPHHIVIGSVRDVSTPSVAELKASPTAPPGSKLLLVHIESTSSTDPAAAVEAIRAQGIDHIDIAIANAGAMPSTVPIEEVDTKDMLENYHINAIGPLLLFQALLPLLKKGTEPKWASVSTTAGSIGLVDPLAAWILPAYGGAKAALNWLTAGIASSQKEWMTTIALHPGLVQTGPGNWVAQKVGMGDKAPVTVGDSAASVVKLIDGLTKESNGKFYNAVDGTEVPW.

NADP(+) contacts are provided by Ile-18, Ser-37, Glu-67, Asn-95, Tyr-167, Lys-171, Val-199, and Thr-201. The Proton donor role is filled by Tyr-167. The Lowers pKa of active site Tyr role is filled by Lys-171.

This sequence belongs to the short-chain dehydrogenases/reductases (SDR) family.

In terms of biological role, short-chain dehydrogenase; part of the gene cluster that mediates the biosynthesis of sordarial, a salicylic aldehyde structurally related to the phytotoxin pyriculol. The most interesting aspect of this pathway is formation of an aromatic product from the highly reducing polyketide synthase srdA. SrdA synthesizes a reduced polyketide chain from one molecule of acetyl-CoA and five molecules of malonyl-CoA. The polyketide chain is then reductively released as an aldehyde. The oxidoreductases srdC, srdD and srdE then oxidize one of the hydroxy groups to facilitate the intramolecular aldol condensation, followed by dehydration to yield a salicylic aldehyde. This aldehyde can undergo facile reduction by endogenous reductases to yield the alcohol 1-hydroxy-2-hydroxymethyl-3-pent-1,3-dienylbenzene. The flavin-dependent srdI counteract against the propensity of the aldehydes to be reduced under physiological conditions and is responsible for reoxidizing 1-hydroxy-2-hydroxymethyl-3-pent-1,3-dienylbenzene back to the salicylic aldehyde. This salicylic aldehyde is then selectively epoxidized by the cupin-domain-containing oxidoreductase srdB to yield the epoxide, which can be hydrolyzed stereoselectively by the hydrolase srdG to give the final product sordarial. This Neurospora crassa (strain ATCC 24698 / 74-OR23-1A / CBS 708.71 / DSM 1257 / FGSC 987) protein is Short-chain dehydrogenase srdF.